Reading from the N-terminus, the 276-residue chain is Digeranylgeranylglyceryl phosphate synthase (276 aa).

The next 7 helical transmembrane spans lie at 14–34 (NCIL…GHFP), 40–60 (LLIF…NDYF), 92–112 (FAVG…LGVI), 146–166 (GAVA…AFLV), 202–222 (VGVL…KASV), 224–244 (VGYY…YLIL), and 256–276 (QKLL…AAIV).

This sequence belongs to the UbiA prenyltransferase family. DGGGP synthase subfamily. Requires Mg(2+) as cofactor.

It localises to the cell membrane. It catalyses the reaction sn-3-O-(geranylgeranyl)glycerol 1-phosphate + (2E,6E,10E)-geranylgeranyl diphosphate = 2,3-bis-O-(geranylgeranyl)-sn-glycerol 1-phosphate + diphosphate. The protein operates within membrane lipid metabolism; glycerophospholipid metabolism. Prenyltransferase that catalyzes the transfer of the geranylgeranyl moiety of geranylgeranyl diphosphate (GGPP) to the C2 hydroxyl of (S)-3-O-geranylgeranylglyceryl phosphate (GGGP). This reaction is the second ether-bond-formation step in the biosynthesis of archaeal membrane lipids. The chain is Digeranylgeranylglyceryl phosphate synthase from Thermococcus onnurineus (strain NA1).